A 282-amino-acid chain; its full sequence is Biotin synthase (282 aa).

In terms of domain architecture, Radical SAM core spans 1-228 (MQEIFLCSIS…NARLMVAGGR (228 aa)). 3 residues coordinate [4Fe-4S] cluster: C17, C21, and C24. C61, C96, C154, and R221 together coordinate [2Fe-2S] cluster.

This sequence belongs to the radical SAM superfamily. Biotin synthase family. As to quaternary structure, homodimer. [4Fe-4S] cluster serves as cofactor. [2Fe-2S] cluster is required as a cofactor.

The enzyme catalyses (4R,5S)-dethiobiotin + (sulfur carrier)-SH + 2 reduced [2Fe-2S]-[ferredoxin] + 2 S-adenosyl-L-methionine = (sulfur carrier)-H + biotin + 2 5'-deoxyadenosine + 2 L-methionine + 2 oxidized [2Fe-2S]-[ferredoxin]. Its pathway is cofactor biosynthesis; biotin biosynthesis; biotin from 7,8-diaminononanoate: step 2/2. In terms of biological role, catalyzes the conversion of dethiobiotin (DTB) to biotin by the insertion of a sulfur atom into dethiobiotin via a radical-based mechanism. The polypeptide is Biotin synthase (Helicobacter pylori (strain ATCC 700392 / 26695) (Campylobacter pylori)).